The chain runs to 122 residues: Large ribosomal subunit protein uL14 (122 aa).

Belongs to the universal ribosomal protein uL14 family. In terms of assembly, part of the 50S ribosomal subunit. Forms a cluster with proteins L3 and L19. In the 70S ribosome, L14 and L19 interact and together make contacts with the 16S rRNA in bridges B5 and B8.

In terms of biological role, binds to 23S rRNA. Forms part of two intersubunit bridges in the 70S ribosome. The polypeptide is Large ribosomal subunit protein uL14 (Ralstonia nicotianae (strain ATCC BAA-1114 / GMI1000) (Ralstonia solanacearum)).